Consider the following 239-residue polypeptide: Ribonuclease P protein component 3 (239 aa).

Belongs to the eukaryotic/archaeal RNase P protein component 3 family. In terms of assembly, consists of a catalytic RNA component and at least 4-5 protein subunits.

The protein localises to the cytoplasm. It catalyses the reaction Endonucleolytic cleavage of RNA, removing 5'-extranucleotides from tRNA precursor.. Part of ribonuclease P, a protein complex that generates mature tRNA molecules by cleaving their 5'-ends. The chain is Ribonuclease P protein component 3 from Methanosarcina acetivorans (strain ATCC 35395 / DSM 2834 / JCM 12185 / C2A).